The sequence spans 179 residues: Large ribosomal subunit protein uL6 (179 aa).

The protein belongs to the universal ribosomal protein uL6 family. As to quaternary structure, part of the 50S ribosomal subunit.

Functionally, this protein binds to the 23S rRNA, and is important in its secondary structure. It is located near the subunit interface in the base of the L7/L12 stalk, and near the tRNA binding site of the peptidyltransferase center. This chain is Large ribosomal subunit protein uL6, found in Synechococcus elongatus (strain ATCC 33912 / PCC 7942 / FACHB-805) (Anacystis nidulans R2).